Reading from the N-terminus, the 365-residue chain is Spermidine-binding periplasmic protein SpuE (365 aa).

Residues 1–24 (MQHSIGKTLLVAALATAIAGPVQA) form the signal peptide. Spermidine is bound by residues threonine 35, glutamate 181, aspartate 242, and asparagine 269.

It belongs to the bacterial solute-binding protein PotD/PotF family.

It is found in the periplasm. Its function is as follows. Spermidine-binding protein probably required for its uptake into cells. Binds spermidine with high affinity (KD=14.3 nM). Does not bind putrescine, cadaverine or spermine. Spermidine binding induces large inter-domain conformational changes. Implicated in induction of type 3 secretion systems (T3SS), which play a role in virulence. The chain is Spermidine-binding periplasmic protein SpuE (spuE) from Pseudomonas aeruginosa (strain ATCC 15692 / DSM 22644 / CIP 104116 / JCM 14847 / LMG 12228 / 1C / PRS 101 / PAO1).